The chain runs to 168 residues: Fusion protein P6 (168 aa).

4 helical membrane passes run Ile29–Phe49, Ala52–Leu72, Phe94–Ala114, and Ala143–Ser163.

In terms of assembly, interacts with P3.

It is found in the virion membrane. Functionally, mediates the fusion with the host outer membrane during virus entry into the host cell. This is Fusion protein P6 (P6) from Pseudomonas savastanoi pv. phaseolicola (Pseudomonas syringae pv. phaseolicola).